We begin with the raw amino-acid sequence, 237 residues long: Fluoroquinolones export permease protein MT2761 (237 aa).

The next 6 membrane-spanning stretches (helical) occupy residues 20–40, 49–69, 96–116, 119–139, 147–167, and 199–219; these read FLHAAVFSGLIWLAVLLPMPV, YVLVGDIAIIGFFFVGGTVFF, VLLAISLFVAVVVATIVHGLG, LLPLVAGIVLGTLLMLLVGFS, VTDWFLAAVIPLAIMLAPPVV, and LAPWQVGYAVVYPIVCAAGLC.

The complex is composed of 2 ATP-binding proteins and 2 transmembrane proteins.

Its subcellular location is the cell membrane. Its function is as follows. Part of the ABC transporter complex involved in fluoroquinolones export. Probably responsible for the translocation of the substrate across the membrane. In Mycobacterium tuberculosis (strain CDC 1551 / Oshkosh), this protein is Fluoroquinolones export permease protein MT2761.